The primary structure comprises 97 residues: Scorpine-like peptide Ev37 (97 aa).

An N-terminal signal peptide occupies residues 1 to 19; that stretch reads MNSKLTVIVLLALITIASC. One can recognise a BetaSPN-type CS-alpha/beta domain in the interval 55 to 95; it reads QNLCAFNVDTVGMCDADCKRQGKAKGVCHGTKCKCDVELSY. Cystine bridges form between Cys-58/Cys-82, Cys-68/Cys-87, and Cys-72/Cys-89.

It belongs to the long chain scorpion toxin family. Class 3 subfamily. Expressed by the venom gland.

The protein resides in the secreted. Selectively inhibits Kv1.3/KCNA3 channel (IC(50)=0.95 uM). Both N-terminal and C-terminal domains are likely involved in the interaction with Kv1.3/KCNA3, since neither its N-terminal domain (1-36) nor its C-terminal domain (37-78) block Kv1.3/KCNA3 channel. The polypeptide is Scorpine-like peptide Ev37 (Euscorpiops validus (Scorpion)).